Reading from the N-terminus, the 219-residue chain is Oligoribonuclease (219 aa).

One can recognise an Exonuclease domain in the interval 19-184 (LVWVDLEMTG…ADIVESIREL (166 aa)). The active site involves Y141.

Belongs to the oligoribonuclease family.

Its subcellular location is the cytoplasm. Functionally, 3'-to-5' exoribonuclease specific for small oligoribonucleotides. The polypeptide is Oligoribonuclease (Corynebacterium glutamicum (strain R)).